A 568-amino-acid chain; its full sequence is N66 matrix protein (568 aa).

An N-terminal signal peptide occupies residues 1 to 22 (MWRMTTLLHLTALLVLIPLCHC). The Alpha-carbonic anhydrase domain occupies 55 to 567 (AGFSYNRDIC…KHPLRVYKNS (513 aa)). Residues His154, His156, and His179 each coordinate Zn(2+). The tract at residues 259 to 421 (NGNNGNNGNG…NGYNGDNGNS (163 aa)) is disordered. Positions 280 to 290 (GNNGNGNGNNG) are enriched in gly residues. Low complexity predominate over residues 291 to 318 (YNGNNGYNGNNGNNGNGNNDNNGNDNNG). Gly residues-rich tracts occupy residues 319–352 (NNGG…GNNG) and 362–380 (NGNG…GNNG). Asn389 is a glycosylation site (N-linked (GlcNAc...) asparagine). Positions 390-413 (GSNGNNGGNGNNGNNGDNGNGDNG) are enriched in gly residues. 506–507 (TT) is a substrate binding site. An N-linked (GlcNAc...) asparagine glycan is attached at Asn511.

It belongs to the alpha-carbonic anhydrase family. As to quaternary structure, homooligomer; disulfide-linked. May also be disulfide-linked to insoluble organic matrix. It depends on Zn(2+) as a cofactor. As to expression, expressed in both the dorsal region of the mantle and the mantle edge. Is dispersed in calcium carbonate and also linked by disulfide bonds to the organic core of nacre.

It is found in the secreted. It localises to the extracellular space. The protein resides in the extracellular matrix. The enzyme catalyses hydrogencarbonate + H(+) = CO2 + H2O. In terms of biological role, acts as a negative regulator for calcification in the shells of mollusks. May function both as a calcium concentrator and as a carbonic anhydrase required for production of carbonate ions, which are assembled to CaCO(3) at mineralization sites. Is important for shell formation in both the calcitic prismatic layer and the aragonitic nacreous layer. The chain is N66 matrix protein from Pinctada maxima (Silver-lipped pearl oyster).